Consider the following 406-residue polypeptide: ATP synthase subunit a (406 aa).

2 stretches are compositionally biased toward low complexity: residues 22 to 31 and 43 to 59; these read AGEHGAPAPE and DAAG…AEHG. The interval 22 to 76 is disordered; sequence AGEHGAPAPEVATPAEGHGARDAAGAATDPHGAAAEHGAAAHEDPAQHGAAGAEA. 6 consecutive transmembrane segments (helical) span residues 151-171, 209-229, 232-252, 278-298, 304-324, and 351-371; these read KHVV…FAAV, FVPY…FGLV, AATA…TFLI, LWPL…TKPF, LFAN…LIFA, and VQAY…VAHH. The interval 375–406 is disordered; that stretch reads DEHEEHGHGAAATGGAHGSHGSHVAGASPGHG. A compositionally biased stretch (low complexity) spans 383–406; the sequence is GAAATGGAHGSHGSHVAGASPGHG.

This sequence belongs to the ATPase A chain family. F-type ATPases have 2 components, CF(1) - the catalytic core - and CF(0) - the membrane proton channel. CF(1) has five subunits: alpha(3), beta(3), gamma(1), delta(1), epsilon(1). CF(0) has three main subunits: a(1), b(2) and c(9-12). The alpha and beta chains form an alternating ring which encloses part of the gamma chain. CF(1) is attached to CF(0) by a central stalk formed by the gamma and epsilon chains, while a peripheral stalk is formed by the delta and b chains.

The protein localises to the cell inner membrane. Key component of the proton channel; it plays a direct role in the translocation of protons across the membrane. The chain is ATP synthase subunit a from Anaeromyxobacter sp. (strain Fw109-5).